The following is a 108-amino-acid chain: Large ribosomal subunit protein uL24 (108 aa).

Belongs to the universal ribosomal protein uL24 family. Part of the 50S ribosomal subunit.

In terms of biological role, one of two assembly initiator proteins, it binds directly to the 5'-end of the 23S rRNA, where it nucleates assembly of the 50S subunit. One of the proteins that surrounds the polypeptide exit tunnel on the outside of the subunit. In Desulfosudis oleivorans (strain DSM 6200 / JCM 39069 / Hxd3) (Desulfococcus oleovorans), this protein is Large ribosomal subunit protein uL24.